Reading from the N-terminus, the 466-residue chain is Putative D-3-phosphoglycerate dehydrogenase (466 aa).

The span at 1-15 (MDIKGGRRGNVEDSL) shows a compositional bias: basic and acidic residues. The disordered stretch occupies residues 1 to 26 (MDIKGGRRGNVEDSLNKLSLSPPDNN). Positions 16–26 (NKLSLSPPDNN) are enriched in polar residues. A Phosphoserine modification is found at S87. NAD(+)-binding positions include 205–206 (HI) and D225. S258 carries the post-translational modification Phosphoserine. NAD(+) contacts are provided by residues 282-284 (ASR) and D308. Residue R284 is part of the active site. The active site involves E313. The Proton donor role is filled by H344. Residue 344–347 (HIGG) participates in NAD(+) binding. The 71-residue stretch at 396–466 (RVLFVHRNVP…PCKINTRLLY (71 aa)) folds into the ACT domain.

The protein belongs to the D-isomer specific 2-hydroxyacid dehydrogenase family.

It catalyses the reaction (2R)-3-phosphoglycerate + NAD(+) = 3-phosphooxypyruvate + NADH + H(+). It carries out the reaction (R)-2-hydroxyglutarate + NAD(+) = 2-oxoglutarate + NADH + H(+). The protein operates within amino-acid biosynthesis; L-serine biosynthesis; L-serine from 3-phospho-D-glycerate: step 1/3. In terms of biological role, catalyzes the reversible oxidation of 3-phospho-D-glycerate to 3-phosphonooxypyruvate, the first step of the phosphorylated L-serine biosynthesis pathway. Also catalyzes the reversible oxidation of 2-hydroxyglutarate to 2-oxoglutarate. In Schizosaccharomyces pombe (strain 972 / ATCC 24843) (Fission yeast), this protein is Putative D-3-phosphoglycerate dehydrogenase.